The following is a 492-amino-acid chain: Proline--tRNA ligase (492 aa).

Belongs to the class-II aminoacyl-tRNA synthetase family. ProS type 3 subfamily. Homodimer.

Its subcellular location is the cytoplasm. It catalyses the reaction tRNA(Pro) + L-proline + ATP = L-prolyl-tRNA(Pro) + AMP + diphosphate. Its function is as follows. Catalyzes the attachment of proline to tRNA(Pro) in a two-step reaction: proline is first activated by ATP to form Pro-AMP and then transferred to the acceptor end of tRNA(Pro). The protein is Proline--tRNA ligase of Flavobacterium johnsoniae (strain ATCC 17061 / DSM 2064 / JCM 8514 / BCRC 14874 / CCUG 350202 / NBRC 14942 / NCIMB 11054 / UW101) (Cytophaga johnsonae).